Consider the following 168-residue polypeptide: Protein OPG162 (168 aa).

Over 1–14 (MKSLNRQTVSRFKK) the chain is Intravirion. A helical transmembrane segment spans residues 15–37 (LSVPAAIMMILSTIISGIGTFLH). Over 38 to 168 (YKEELMPSAC…SVLCVKKFYK (131 aa)) the chain is Virion surface. The region spanning 54 to 163 (YDKHCYLDTN…CKSTQSVLCV (110 aa)) is the C-type lectin domain. 2 disulfide bridges follow: Cys-75/Cys-162 and Cys-141/Cys-154. Asn-133 carries an N-linked (GlcNAc...) asparagine; by host glycan.

This sequence belongs to the orthopoxvirus OPG162 protein family. In terms of assembly, interacts with protein OPG161. Interacts with protein OPG164. Interacts with protein OPG190.

Its subcellular location is the virion membrane. The protein localises to the host Golgi apparatus. Forms a complex with OPG162 and OPG190 to coordinate the incorporation of OPG164 into wrapped enveloped virion (EV) membranes and, subsequently, the production of actin tails. Therefore plays an essential role in efficient cell-to-cell spread of viral particles. The chain is Protein OPG162 (OPG162) from Vaccinia virus (strain Western Reserve) (VACV).